Reading from the N-terminus, the 585-residue chain is L-gulonolactone oxidase 3 (585 aa).

The first 24 residues, 1–24, serve as a signal peptide directing secretion; the sequence is MRYSHTLQQFSILSFFVTIWTVQS. Positions 51–233 constitute an FAD-binding PCMH-type domain; sequence KTCHAANVTY…SKVKLSIEKA (183 aa).

It belongs to the oxygen-dependent FAD-linked oxidoreductase family. FAD serves as cofactor.

The protein resides in the vacuole. The catalysed reaction is L-gulono-1,4-lactone + O2 = L-ascorbate + H2O2 + H(+). It participates in cofactor biosynthesis; L-ascorbate biosynthesis. Its function is as follows. Catalyzes the oxidation of L-gulono-1,4-lactone to ascorbic acid. L-gulono-1,4-lactone is oxidized to hydrogen peroxide and L-xylo-hexulonolactone which spontaneously isomerizes to L-ascorbate. The chain is L-gulonolactone oxidase 3 from Arabidopsis thaliana (Mouse-ear cress).